The following is a 983-amino-acid chain: Glycine dehydrogenase (decarboxylating) (983 aa).

Lys731 is subject to N6-(pyridoxal phosphate)lysine.

The protein belongs to the GcvP family. In terms of assembly, the glycine cleavage system is composed of four proteins: P, T, L and H. Requires pyridoxal 5'-phosphate as cofactor.

The enzyme catalyses N(6)-[(R)-lipoyl]-L-lysyl-[glycine-cleavage complex H protein] + glycine + H(+) = N(6)-[(R)-S(8)-aminomethyldihydrolipoyl]-L-lysyl-[glycine-cleavage complex H protein] + CO2. Its function is as follows. The glycine cleavage system catalyzes the degradation of glycine. The P protein binds the alpha-amino group of glycine through its pyridoxal phosphate cofactor; CO(2) is released and the remaining methylamine moiety is then transferred to the lipoamide cofactor of the H protein. The polypeptide is Glycine dehydrogenase (decarboxylating) (Nostoc sp. (strain PCC 7120 / SAG 25.82 / UTEX 2576)).